The following is a 419-amino-acid chain: UDP-N-acetylglucosamine 1-carboxyvinyltransferase (419 aa).

Phosphoenolpyruvate is bound at residue lysine 23–asparagine 24. Residue arginine 92 coordinates UDP-N-acetyl-alpha-D-glucosamine. The Proton donor role is filled by cysteine 116. 2-(S-cysteinyl)pyruvic acid O-phosphothioketal is present on cysteine 116. UDP-N-acetyl-alpha-D-glucosamine-binding positions include arginine 121 to leucine 125, lysine 161 to valine 164, aspartate 306, and isoleucine 328.

Belongs to the EPSP synthase family. MurA subfamily.

It localises to the cytoplasm. It carries out the reaction phosphoenolpyruvate + UDP-N-acetyl-alpha-D-glucosamine = UDP-N-acetyl-3-O-(1-carboxyvinyl)-alpha-D-glucosamine + phosphate. Its pathway is cell wall biogenesis; peptidoglycan biosynthesis. Cell wall formation. Adds enolpyruvyl to UDP-N-acetylglucosamine. The polypeptide is UDP-N-acetylglucosamine 1-carboxyvinyltransferase (Vibrio cholerae serotype O1 (strain ATCC 39541 / Classical Ogawa 395 / O395)).